The sequence spans 151 residues: Small ribosomal subunit protein uS15 (151 aa).

A Phosphoserine modification is found at S32. Residues K39 and K43 each participate in a glycyl lysine isopeptide (Lys-Gly) (interchain with G-Cter in ubiquitin) cross-link.

Belongs to the universal ribosomal protein uS15 family. In terms of assembly, component of the small ribosomal subunit (SSU). Mature yeast ribosomes consist of a small (40S) and a large (60S) subunit. The 40S small subunit contains 1 molecule of ribosomal RNA (18S rRNA) and 33 different proteins (encoded by 57 genes). The large 60S subunit contains 3 rRNA molecules (25S, 5.8S and 5S rRNA) and 46 different proteins (encoded by 81 genes).

It localises to the cytoplasm. In terms of biological role, component of the ribosome, a large ribonucleoprotein complex responsible for the synthesis of proteins in the cell. The small ribosomal subunit (SSU) binds messenger RNAs (mRNAs) and translates the encoded message by selecting cognate aminoacyl-transfer RNA (tRNA) molecules. The large subunit (LSU) contains the ribosomal catalytic site termed the peptidyl transferase center (PTC), which catalyzes the formation of peptide bonds, thereby polymerizing the amino acids delivered by tRNAs into a polypeptide chain. The nascent polypeptides leave the ribosome through a tunnel in the LSU and interact with protein factors that function in enzymatic processing, targeting, and the membrane insertion of nascent chains at the exit of the ribosomal tunnel. The polypeptide is Small ribosomal subunit protein uS15 (Saccharomyces cerevisiae (strain ATCC 204508 / S288c) (Baker's yeast)).